The following is a 29-amino-acid chain: Trypsin inhibitor 1 (29 aa).

3 cysteine pairs are disulfide-bonded: cysteine 3/cysteine 20, cysteine 10/cysteine 22, and cysteine 16/cysteine 28.

This sequence belongs to the protease inhibitor I7 (squash-type serine protease inhibitor) family.

The protein resides in the secreted. Functionally, inhibits trypsin. This is Trypsin inhibitor 1 from Momordica repens.